The chain runs to 39 residues: Colipase (39 aa).

Intrachain disulfides connect Cys16/Cys27 and Cys22/Cys38.

It belongs to the colipase family. In terms of assembly, forms a 1:1 stoichiometric complex with pancreatic lipase. As to expression, expressed by the pancreas.

It is found in the secreted. Colipase is a cofactor of pancreatic lipase. It allows the lipase to anchor itself to the lipid-water interface. Without colipase the enzyme is washed off by bile salts, which have an inhibitory effect on the lipase. This is Colipase from Squalus acanthias (Spiny dogfish).